A 418-amino-acid polypeptide reads, in one-letter code: Cyclin-dependent kinase 15 (418 aa).

A Protein kinase domain is found at 84 to 369 (YLNLEKLGEG…AQDALLHPYF (286 aa)). ATP-binding positions include 90-98 (LGEGTYATV) and Lys-113. Residue Asp-205 is the Proton acceptor of the active site.

It belongs to the protein kinase superfamily. CMGC Ser/Thr protein kinase family. CDC2/CDKX subfamily. Mg(2+) serves as cofactor.

It catalyses the reaction L-seryl-[protein] + ATP = O-phospho-L-seryl-[protein] + ADP + H(+). It carries out the reaction L-threonyl-[protein] + ATP = O-phospho-L-threonyl-[protein] + ADP + H(+). Serine/threonine-protein kinase involved in the control of the eukaryotic cell cycle, whose activity is controlled by an associated cyclin. The protein is Cyclin-dependent kinase 15 (cdk15) of Danio rerio (Zebrafish).